We begin with the raw amino-acid sequence, 348 residues long: Aspartate carbamoyltransferase catalytic subunit (348 aa).

Positions 59 and 60 each coordinate carbamoyl phosphate. Position 87 (K87) interacts with L-aspartate. Residues R109, H142, and Q145 each contribute to the carbamoyl phosphate site. L-aspartate-binding residues include R182 and R253. Carbamoyl phosphate contacts are provided by G294 and P295.

The protein belongs to the aspartate/ornithine carbamoyltransferase superfamily. ATCase family. In terms of assembly, heterododecamer (2C3:3R2) of six catalytic PyrB chains organized as two trimers (C3), and six regulatory PyrI chains organized as three dimers (R2).

It carries out the reaction carbamoyl phosphate + L-aspartate = N-carbamoyl-L-aspartate + phosphate + H(+). Its pathway is pyrimidine metabolism; UMP biosynthesis via de novo pathway; (S)-dihydroorotate from bicarbonate: step 2/3. Catalyzes the condensation of carbamoyl phosphate and aspartate to form carbamoyl aspartate and inorganic phosphate, the committed step in the de novo pyrimidine nucleotide biosynthesis pathway. This Prochlorococcus marinus (strain MIT 9313) protein is Aspartate carbamoyltransferase catalytic subunit.